We begin with the raw amino-acid sequence, 380 residues long: Cytochrome b (380 aa).

A run of 4 helical transmembrane segments spans residues 34–54 (FGSL…FLAM), 78–99 (WLLR…YCHI), 114–134 (WNVG…GYVL), and 179–199 (FFAF…IDLV). Positions 84 and 98 each coordinate heme b. Position 183 (His-183) interacts with heme b. His-202 is a binding site for a ubiquinone. 4 helical membrane passes run 227–247 (TKDT…ALLF), 289–309 (LGGV…PLLN), 321–341 (LSQA…WIGS), and 348–369 (FVLI…GFPL).

It belongs to the cytochrome b family. As to quaternary structure, the main subunits of complex b-c1 are: cytochrome b, cytochrome c1 and the Rieske protein. Heme b serves as cofactor.

It is found in the mitochondrion inner membrane. In terms of biological role, component of the ubiquinol-cytochrome c reductase complex (complex III or cytochrome b-c1 complex) that is part of the mitochondrial respiratory chain. The b-c1 complex mediates electron transfer from ubiquinol to cytochrome c. Contributes to the generation of a proton gradient across the mitochondrial membrane that is then used for ATP synthesis. The polypeptide is Cytochrome b (MT-CYB) (Paracentrotus lividus (Common sea urchin)).